The sequence spans 352 residues: Zona pellucida-binding protein 2 (352 aa).

The N-terminal stretch at 1–28 is a signal peptide; sequence MAGGGGRPCSPQRALLGMVAIMAVVAEA. Residues Asn-110 and Asn-309 are each glycosylated (N-linked (GlcNAc...) asparagine).

The protein belongs to the zona pellucida-binding protein Sp38 family.

It is found in the secreted. It localises to the cytoplasmic vesicle. The protein resides in the secretory vesicle. The protein localises to the acrosome. In terms of biological role, may be implicated in the gamete interaction during fertilization. The chain is Zona pellucida-binding protein 2 (ZPBP2) from Gallus gallus (Chicken).